We begin with the raw amino-acid sequence, 234 residues long: Sugar fermentation stimulation protein A (234 aa).

Positions 201–220 (LLSEAQQRGVEILAYKAEIS) form a DNA-binding region, H-T-H motif.

This sequence belongs to the SfsA family.

Its function is as follows. Binds to DNA non-specifically. Could be a regulatory factor involved in maltose metabolism. The polypeptide is Sugar fermentation stimulation protein A (Shigella flexneri).